The chain runs to 152 residues: Male-specific protein scotti (152 aa).

Belongs to the male-specific scotti family.

Functionally, post-meiotically transcribed gene that has a role in late spermiogenesis; required for actin cone progression during spermatid individualization. The polypeptide is Male-specific protein scotti (Drosophila mojavensis (Fruit fly)).